Reading from the N-terminus, the 391-residue chain is Nuclear hormone receptor family member nhr-115 (391 aa).

The segment at residues 5–77 (LFPCQICGQN…IGMDASKFQY (73 aa)) is a DNA-binding region (nuclear receptor). The segment at 8 to 28 (CQICGQNSHGTHFGIVSCRAC) adopts an NR C4-type zinc-finger fold. The segment at 41 to 65 (ARKGCLTNFKDKGSCFCKPCRLRKC) adopts an NR C4-type; atypical zinc-finger fold. An NR LBD domain is found at 130 to 388 (YLDHGCETPI…FSHPEMFDDS (259 aa)).

Belongs to the nuclear hormone receptor family.

The protein localises to the nucleus. In terms of biological role, orphan nuclear receptor. The protein is Nuclear hormone receptor family member nhr-115 (nhr-115) of Caenorhabditis elegans.